A 304-amino-acid chain; its full sequence is Dihydroorotate dehydrogenase B (NAD(+)), catalytic subunit (304 aa).

Residues Ser-21 and 45-46 (KA) each bind FMN. Substrate contacts are provided by residues Lys-45 and 69-73 (NAIGL). 2 residues coordinate FMN: Asn-99 and Asn-127. Residue Asn-127 participates in substrate binding. Cys-130 (nucleophile) is an active-site residue. The FMN site is built by Lys-165 and Ile-191. 192–193 (NT) lines the substrate pocket. Residues Gly-217, 243–244 (GG), and 265–266 (GT) each bind FMN.

This sequence belongs to the dihydroorotate dehydrogenase family. Type 1 subfamily. In terms of assembly, heterotetramer of 2 PyrK and 2 PyrD type B subunits. FMN is required as a cofactor.

The protein localises to the cytoplasm. It catalyses the reaction (S)-dihydroorotate + NAD(+) = orotate + NADH + H(+). It functions in the pathway pyrimidine metabolism; UMP biosynthesis via de novo pathway; orotate from (S)-dihydroorotate (NAD(+) route): step 1/1. In terms of biological role, catalyzes the conversion of dihydroorotate to orotate with NAD(+) as electron acceptor. The protein is Dihydroorotate dehydrogenase B (NAD(+)), catalytic subunit (pyrD) of Listeria welshimeri serovar 6b (strain ATCC 35897 / DSM 20650 / CCUG 15529 / CIP 8149 / NCTC 11857 / SLCC 5334 / V8).